The following is a 76-amino-acid chain: Horsegram inhibitor 1 (76 aa).

7 cysteine pairs are disulfide-bonded: Cys-16/Cys-70, Cys-17/Cys-32, Cys-20/Cys-66, Cys-22/Cys-30, Cys-40/Cys-47, Cys-44/Cys-59, and Cys-49/Cys-57.

It belongs to the Bowman-Birk serine protease inhibitor family. HGI-III exists in a state of equilibrium between monomer, homodimer and trimer, with homodimer being the predominant form. The homodimer is stabilized by the non-covalent interaction between Lys-24 of one subunit and Asp-76 of the other subunit. The homodimer is more thermostable than the monomer. HGGI-I, HGGI-II and HGGI-III exist as monomers. Post-translationally, HGGI-I, HGGI-II and HGGI-III are produced by proteolysis of the N- and C-termini of HGI-III.

In terms of biological role, inhibitors of trypsin and chymotrypsin. HGGI-III has a higher activity than HGGI-I or HGGI-II. In Vigna unguiculata subsp. cylindrica (Horse gram), this protein is Horsegram inhibitor 1.